We begin with the raw amino-acid sequence, 194 residues long: Glycerol-3-phosphate acyltransferase (194 aa).

The next 5 membrane-spanning stretches (helical) occupy residues 7–27, 59–79, 86–106, 116–136, and 157–177; these read LLMA…YWVC, LTLF…AMLG, GVTA…HFKG, AGLA…AAVV, and AWRL…FILI.

This sequence belongs to the PlsY family. Probably interacts with PlsX.

It is found in the cell inner membrane. The enzyme catalyses an acyl phosphate + sn-glycerol 3-phosphate = a 1-acyl-sn-glycero-3-phosphate + phosphate. It participates in lipid metabolism; phospholipid metabolism. Its function is as follows. Catalyzes the transfer of an acyl group from acyl-phosphate (acyl-PO(4)) to glycerol-3-phosphate (G3P) to form lysophosphatidic acid (LPA). This enzyme utilizes acyl-phosphate as fatty acyl donor, but not acyl-CoA or acyl-ACP. This is Glycerol-3-phosphate acyltransferase from Hahella chejuensis (strain KCTC 2396).